The sequence spans 703 residues: Fanconi anemia group B protein homolog (703 aa).

In terms of assembly, belongs to the multisubunit FA complex composed of FANCA, FANCB, FANCC, FANCE, FANCF, FANCG, FANCL/PHF9 and FANCM.

It localises to the nucleus. DNA repair protein required for FANCD2 ubiquitination. This is Fanconi anemia group B protein homolog (Fancb) from Mus musculus (Mouse).